A 197-amino-acid chain; its full sequence is MLHFSGSLTRLVGELKKLPGVGEKSAQRLAFHLLKHPSNIEALAQSLLQVGERVHLCSVCFAITEDDPCWICSGERDSGTICVVEEPQDLLALERSRAFSGRYHVLQGALSPLNGVTPKDLRIAELMQRLQGGEVREVLIATNFTVEGEATALYLTRLIKPLSIKVTRLAHGIPVGSDLEYVDAATVQRAVEGRSEL.

Residues 57 to 72 form a C4-type zinc finger; the sequence is CSVCFAITEDDPCWIC. The Toprim domain maps to 79-174; sequence GTICVVEEPQ…KVTRLAHGIP (96 aa).

This sequence belongs to the RecR family.

Functionally, may play a role in DNA repair. It seems to be involved in an RecBC-independent recombinational process of DNA repair. It may act with RecF and RecO. The sequence is that of Recombination protein RecR from Citrifermentans bemidjiense (strain ATCC BAA-1014 / DSM 16622 / JCM 12645 / Bem) (Geobacter bemidjiensis).